A 488-amino-acid polypeptide reads, in one-letter code: Probable apyrase 5 (488 aa).

The interval 1–26 (MDALKVQILPDNQSSPSSTHMLTKPK) is disordered. Residues 1–32 (MDALKVQILPDNQSSPSSTHMLTKPKSKKATK) lie on the Cytoplasmic side of the membrane. Over residues 10–21 (PDNQSSPSSTHM) the composition is skewed to polar residues. Residues 33 to 53 (SIAMLIVASLAITLGLLFVFS) form a helical; Signal-anchor for type II membrane protein membrane-spanning segment. Topologically, residues 54–488 (SNSVMFSASF…GKSRKMIGFK (435 aa)) are extracellular. 73 to 83 (VIIDAGSSGTR) is an ATP binding site. The active-site Proton acceptor is the glutamate 196. 220–230 (GIVELGGASAQ) is a binding site for ATP. An N-linked (GlcNAc...) asparagine glycan is attached at asparagine 251.

It belongs to the GDA1/CD39 NTPase family. It depends on Ca(2+) as a cofactor. Highly expressed in young rosette leaves but only weakly in roots.

It is found in the membrane. The enzyme catalyses a ribonucleoside 5'-triphosphate + 2 H2O = a ribonucleoside 5'-phosphate + 2 phosphate + 2 H(+). Functionally, catalyzes the hydrolysis of phosphoanhydride bonds of nucleoside tri- and di-phosphates. This Arabidopsis thaliana (Mouse-ear cress) protein is Probable apyrase 5 (APY5).